The sequence spans 234 residues: Proteasome subunit alpha type-2 (234 aa).

It belongs to the peptidase T1A family. In terms of assembly, the 26S proteasome consists of a 20S proteasome core and two 19S regulatory subunits. The 20S proteasome core is composed of 28 subunits that are arranged in four stacked rings, resulting in a barrel-shaped structure. The two end rings are each formed by seven alpha subunits, and the two central rings are each formed by seven beta subunits. The catalytic chamber with the active sites is on the inside of the barrel. Interacts with Rpn6.

The protein resides in the cytoplasm. It localises to the nucleus. Functionally, the proteasome is a multicatalytic proteinase complex which is characterized by its ability to cleave peptides with Arg, Phe, Tyr, Leu, and Glu adjacent to the leaving group at neutral or slightly basic pH. The proteasome has an ATP-dependent proteolytic activity. This is Proteasome subunit alpha type-2 (Prosalpha2) from Drosophila melanogaster (Fruit fly).